A 185-amino-acid polypeptide reads, in one-letter code: Elongation factor P (185 aa).

This sequence belongs to the elongation factor P family.

The protein resides in the cytoplasm. It participates in protein biosynthesis; polypeptide chain elongation. Involved in peptide bond synthesis. Stimulates efficient translation and peptide-bond synthesis on native or reconstituted 70S ribosomes in vitro. Probably functions indirectly by altering the affinity of the ribosome for aminoacyl-tRNA, thus increasing their reactivity as acceptors for peptidyl transferase. This is Elongation factor P from Metamycoplasma arthritidis (strain 158L3-1) (Mycoplasma arthritidis).